Here is a 1620-residue protein sequence, read N- to C-terminus: Myb-like protein X (1620 aa).

The segment covering 1-13 (MSTIGNNASSIGN) has biased composition (polar residues). Disordered stretches follow at residues 1 to 57 (MSTI…TTTT), 176 to 204 (TGSG…SNIG), 294 to 318 (FFQD…NMTE), and 450 to 849 (KEEK…TKSA). The segment covering 28–57 (PPTTTTTTTTTTTTTTTTPTTTTPTTTTTT) has biased composition (low complexity). Over residues 177-187 (GSGGIGGGGSG) the composition is skewed to gly residues. An SWIRM domain is found at 310-421 (GSGSNNMTEI…CFVNSGDYMN (112 aa)). Residues 450–497 (KEEKERLEREEKERLEREEKQEKEEKERLEKEEKERLEREEKQEKEEK) are compositionally biased toward basic and acidic residues. The span at 498-511 (EEKEEKEENEEKEE) shows a compositional bias: acidic residues. The segment covering 512–568 (KEEKEKEEKEEKEKQEKEDDKEKQENENEQEKIEKKENKNDSQNKEIKENHDKKDET) has biased composition (basic and acidic residues). Residues 570–598 (DSNNTTTTTTTTTTTSTNTLVAESSSSSS) show a composition bias toward low complexity. Over residues 606–628 (KEMKEQPVQENKDKEMMETDTTK) the composition is skewed to basic and acidic residues. The segment covering 629-645 (ENNGVETTETTNQTTDS) has biased composition (low complexity). Residues 647–798 (ETDKEMKDQP…EIKKDKLKEN (152 aa)) are compositionally biased toward basic and acidic residues. A compositionally biased stretch (acidic residues) spans 799–834 (EEVEGEIEGENDEGEVVEEDEDEEMEIEEDEEDEED). In terms of domain architecture, SANT spans 925-977 (PEEFGWTDIETLLLLEGIEIFRDNWQEISDYIGGSKTPEQCLTHFIRLPIEDE). Residues 1049-1506 (QPSKEELERI…DDDEDVEMET (458 aa)) form a disordered region. Composition is skewed to basic and acidic residues over residues 1051-1195 (SKEE…DKSD), 1219-1255 (ETVE…KDDN), and 1264-1302 (HNKE…EKDL). Positions 1303 to 1325 (NNLSESQSSNDQSKSNEQMSSDN) are enriched in low complexity. A compositionally biased stretch (polar residues) spans 1338 to 1350 (TQITSKEQNITTD). Low complexity-rich tracts occupy residues 1358 to 1382 (TPTT…TTNT) and 1390 to 1416 (NETN…ESNN). Composition is skewed to acidic residues over residues 1467–1481 (EENE…ENDL) and 1493–1504 (VGEEDDDEDVEM).

It is found in the nucleus. The chain is Myb-like protein X (mybX) from Dictyostelium discoideum (Social amoeba).